The primary structure comprises 80 residues: Myocilin opposite strand protein (80 aa).

The disordered stretch occupies residues 53–80; it reads EQAPPPHRTYLTVPPAPPPSPAEDPTVS.

This is Myocilin opposite strand protein from Homo sapiens (Human).